A 622-amino-acid chain; its full sequence is Probable ATP-citrate synthase (622 aa).

ATP contacts are provided by residues 228 to 248 and 279 to 305; these read ALRY…ELGG and FPTE…KNKA. Glu245 lines the Mg(2+) pocket. The active-site Tele-phosphohistidine intermediate is His287. 306-316 is a binding site for CoA; the sequence is LREAGAVVPTS.

The protein in the N-terminal section; belongs to the succinate/malate CoA ligase beta subunit family. It in the C-terminal section; belongs to the succinate/malate CoA ligase alpha subunit family. As to quaternary structure, homotetramer.

It is found in the cytoplasm. It carries out the reaction oxaloacetate + acetyl-CoA + ADP + phosphate = citrate + ATP + CoA. Functionally, catalyzes the cleavage of citrate into oxaloacetate and acetyl-CoA, the latter serving as common substrate in multiple biochemical reactions in protein, carbohydrate and lipid metabolism. This is Probable ATP-citrate synthase (acly) from Dictyostelium discoideum (Social amoeba).